A 309-amino-acid chain; its full sequence is Polyprenal reductase (309 aa).

The Cytoplasmic portion of the chain corresponds to 1-3; that stretch reads MFH. A helical membrane pass occupies residues 4-24; the sequence is ILSIVNIIWLLLALCFGAAFC. The Lumenal segment spans residues 25 to 67; it reads LNKFSVKLPNRVEHVFQDFIRYGKTKENIKRASWQLVFDLSKR. Residues 68–88 traverse the membrane as a helical segment; that stretch reads YFYHFYVVSVMWNGLLLLFSI. The Cytoplasmic segment spans residues 89–114; that stretch reads RSVVMSEAFPDWIIDVLGSLTGRSRG. A helical membrane pass occupies residues 115-135; that stretch reads AWNEIHLSTLLLQVLLWVHTL. Residues 136–150 lie on the Lumenal side of the membrane; that stretch reads RRLLECLFVSVFSDG. Residues 151 to 171 form a helical membrane-spanning segment; that stretch reads VINVVQYAFGLSYYIILGLTV. Residues 172 to 185 lie on the Cytoplasmic side of the membrane; that stretch reads LCTNDSLPQSESVS. The chain crosses the membrane as a helical span at residues 186–206; it reads FFNQLTWYHVVGTLLFFWASF. The Lumenal segment spans residues 207–255; it reads LQHQSLSLLAKMRTDSSGKVETLAHKMPCGGWFELVSCPHYLAELLIYA. The chain crosses the membrane as a helical span at residues 256–276; the sequence is AMCVCCGCASLTWWMVVLYVL. The Cytoplasmic portion of the chain corresponds to 277–309; the sequence is CNQALAAQLCHEYYRSKFKTYPHHRKAFIPFVL.

This sequence belongs to the steroid 5-alpha reductase family. Polyprenal reductase subfamily.

It localises to the endoplasmic reticulum membrane. The enzyme catalyses a di-trans,poly-cis-dolichal + NADP(+) = a di-trans,poly-cis-polyprenal + NADPH + H(+). It catalyses the reaction a 3-oxo-5alpha-steroid + NADP(+) = a 3-oxo-Delta(4)-steroid + NADPH + H(+). It carries out the reaction androst-4-ene-3,17-dione + NADPH + H(+) = 5alpha-androstan-3,17-dione + NADP(+). The catalysed reaction is 17beta-hydroxy-5alpha-androstan-3-one + NADP(+) = testosterone + NADPH + H(+). The protein operates within protein modification; protein glycosylation. Plays a key role in early steps of protein N-linked glycosylation by being involved in the conversion of polyprenol into dolichol. Acts as a polyprenal reductase that mediates the reduction of polyprenal into dolichal in a NADP-dependent mechanism. Dolichols are required for the synthesis of dolichol-linked monosaccharides and the oligosaccharide precursor used for N-glycosylation. Also able to convert testosterone (T) into 5-alpha-dihydrotestosterone (DHT). The sequence is that of Polyprenal reductase (srd5a3) from Danio rerio (Zebrafish).